Reading from the N-terminus, the 527-residue chain is Sulfate adenylyltransferase (527 aa).

An N-terminal region spans residues 1–176 (MPIPTPHGGK…LQGINYPKHY (176 aa)). Residues 177–406 (DYVDARKTPT…LRETNPPRSK (230 aa)) are catalytic. Q206 is a binding site for sulfate. ATP contacts are provided by residues 206–209 (QTRN) and 302–305 (GRDH). Catalysis depends on residues T207, R208, and N209. R208 serves as a coordination point for sulfate. A306 serves as a coordination point for sulfate. An ATP-binding site is contributed by V344. Residues 407–527 (QGFAILIDNS…VNYLKDQGFY (121 aa)) are required for oligomerization; adenylyl-sulfate kinase-like.

This sequence belongs to the sulfate adenylyltransferase family. Homohexamer. Dimer of trimers.

The protein localises to the cytoplasm. The enzyme catalyses sulfate + ATP + H(+) = adenosine 5'-phosphosulfate + diphosphate. The protein operates within sulfur metabolism; hydrogen sulfide biosynthesis; sulfite from sulfate: step 1/3. Catalyzes the first intracellular reaction of sulfate assimilation, forming adenosine-5'-phosphosulfate (APS) from inorganic sulfate and ATP. Plays an important role in sulfate activation as a component of the biosynthesis pathway of sulfur-containing amino acids. This chain is Sulfate adenylyltransferase, found in Candida albicans (strain SC5314 / ATCC MYA-2876) (Yeast).